A 142-amino-acid chain; its full sequence is Putative pre-16S rRNA nuclease (142 aa).

It belongs to the YqgF nuclease family.

It localises to the cytoplasm. Could be a nuclease involved in processing of the 5'-end of pre-16S rRNA. This chain is Putative pre-16S rRNA nuclease, found in Saccharophagus degradans (strain 2-40 / ATCC 43961 / DSM 17024).